A 193-amino-acid polypeptide reads, in one-letter code: Hypoxanthine/guanine phosphoribosyltransferase (193 aa).

Belongs to the purine/pyrimidine phosphoribosyltransferase family. Archaeal HPRT subfamily. In terms of assembly, homodimer.

It localises to the cytoplasm. It carries out the reaction IMP + diphosphate = hypoxanthine + 5-phospho-alpha-D-ribose 1-diphosphate. The catalysed reaction is GMP + diphosphate = guanine + 5-phospho-alpha-D-ribose 1-diphosphate. Its pathway is purine metabolism; IMP biosynthesis via salvage pathway; IMP from hypoxanthine: step 1/1. In terms of biological role, catalyzes a salvage reaction resulting in the formation of IMP that is energically less costly than de novo synthesis. The sequence is that of Hypoxanthine/guanine phosphoribosyltransferase from Methanothermobacter thermautotrophicus (strain ATCC 29096 / DSM 1053 / JCM 10044 / NBRC 100330 / Delta H) (Methanobacterium thermoautotrophicum).